Consider the following 123-residue polypeptide: ATP synthase epsilon chain (123 aa).

It belongs to the ATPase epsilon chain family. In terms of assembly, F-type ATPases have 2 components, CF(1) - the catalytic core - and CF(0) - the membrane proton channel. CF(1) has five subunits: alpha(3), beta(3), gamma(1), delta(1), epsilon(1). CF(0) has three main subunits: a, b and c.

It localises to the cell inner membrane. Its function is as follows. Produces ATP from ADP in the presence of a proton gradient across the membrane. The protein is ATP synthase epsilon chain of Helicobacter pylori (strain Shi470).